Consider the following 153-residue polypeptide: Small ribosomal subunit protein uS13 (153 aa).

Positions 134-153 (GQRTKSNGRRGRSMGVSRKK) are disordered.

It belongs to the universal ribosomal protein uS13 family.

The protein localises to the cytoplasm. In terms of biological role, located at the top of the head of the 40S subunit, it contacts several helices of the 18S rRNA. This chain is Small ribosomal subunit protein uS13 (RPS18), found in Encephalitozoon cuniculi (strain GB-M1) (Microsporidian parasite).